Here is a 943-residue protein sequence, read N- to C-terminus: UvrABC system protein A (943 aa).

Position 31-38 (31-38 (GLSGSGKS)) interacts with ATP. The segment at 253 to 280 (CPHCGYSVPELEPRLFSFNNPAGACPTC) adopts a C4-type zinc-finger fold. ABC transporter domains are found at residues 310 to 587 (WDRR…PHSI) and 607 to 937 (LDKK…RFLK). An ATP-binding site is contributed by 640-647 (GVSGSGKS). The C4-type zinc-finger motif lies at 740-766 (CEACQGDGVIKVEMHFLPDVYVPCEQC).

Belongs to the ABC transporter superfamily. UvrA family. As to quaternary structure, forms a heterotetramer with UvrB during the search for lesions.

The protein localises to the cytoplasm. The UvrABC repair system catalyzes the recognition and processing of DNA lesions. UvrA is an ATPase and a DNA-binding protein. A damage recognition complex composed of 2 UvrA and 2 UvrB subunits scans DNA for abnormalities. When the presence of a lesion has been verified by UvrB, the UvrA molecules dissociate. The polypeptide is UvrABC system protein A (Pasteurella multocida (strain Pm70)).